Here is a 62-residue protein sequence, read N- to C-terminus: Conotoxin Sr5.6 (62 aa).

The N-terminal stretch at M1–A22 is a signal peptide. The propeptide occupies Q23 to H44. P61 is subject to Proline amide.

This sequence belongs to the conotoxin T superfamily. In terms of processing, contains 2 disulfide bonds that can be either 'C1-C3, C2-C4' or 'C1-C4, C2-C3', since these disulfide connectivities have been observed for conotoxins with cysteine framework V (for examples, see AC P0DQQ7 and AC P81755). In terms of tissue distribution, expressed by the venom duct.

It localises to the secreted. In Conus spurius (Alphabet cone), this protein is Conotoxin Sr5.6.